The primary structure comprises 137 residues: Large ribosomal subunit protein uL16 (137 aa).

The tract at residues 1 to 22 is disordered; that stretch reads MLQPKRTKFRKQQKGRNRGLAH.

This sequence belongs to the universal ribosomal protein uL16 family. In terms of assembly, part of the 50S ribosomal subunit.

Binds 23S rRNA and is also seen to make contacts with the A and possibly P site tRNAs. This Saccharophagus degradans (strain 2-40 / ATCC 43961 / DSM 17024) protein is Large ribosomal subunit protein uL16.